Consider the following 219-residue polypeptide: RNA chaperone ProQ (219 aa).

Residues 102–160 (TLKESQDKAKAKRAERSKDEGDAADKAPRKPKRKPQPQARRDAKPAAKDKPKAAPKAPA) are disordered. 2 stretches are compositionally biased toward basic and acidic residues: residues 105-129 (ESQD…DKAP) and 140-153 (ARRD…DKPK).

This sequence belongs to the ProQ family.

Its subcellular location is the cytoplasm. Its function is as follows. RNA chaperone with significant RNA binding, RNA strand exchange and RNA duplexing activities. This is RNA chaperone ProQ from Shewanella amazonensis (strain ATCC BAA-1098 / SB2B).